A 160-amino-acid chain; its full sequence is Small ribosomal subunit protein uS7B (160 aa).

Belongs to the universal ribosomal protein uS7 family. As to quaternary structure, part of the 30S ribosomal subunit. Contacts proteins S9 and S11.

One of the primary rRNA binding proteins, it binds directly to 16S rRNA where it nucleates assembly of the head domain of the 30S subunit. Is located at the subunit interface close to the decoding center, probably blocks exit of the E-site tRNA. The chain is Small ribosomal subunit protein uS7B from Aquifex aeolicus (strain VF5).